The sequence spans 204 residues: Uracil-DNA glycosylase (204 aa).

Residue Asp-47 is the Proton acceptor of the active site.

Belongs to the uracil-DNA glycosylase (UDG) superfamily. UNG family.

It is found in the host nucleus. It carries out the reaction Hydrolyzes single-stranded DNA or mismatched double-stranded DNA and polynucleotides, releasing free uracil.. In terms of biological role, excises uracil residues from the DNA which can arise as a result of misincorporation of dUMP residues by DNA polymerase or deamination of cytosines. Therefore may reduce deleterious uracil incorporation into the viral genome, particularly in terminally differentiated cells which lack DNA repair enzymes. The polypeptide is Uracil-DNA glycosylase (UL2) (Bos taurus (Bovine)).